Here is a 145-residue protein sequence, read N- to C-terminus: Ribonuclease H (145 aa).

Residues 1 to 141 (MQEVIIYSDG…ADALANRGVA (141 aa)) enclose the RNase H type-1 domain. Residues aspartate 9, glutamate 47, aspartate 69, and aspartate 133 each contribute to the Mg(2+) site.

The protein belongs to the RNase H family. Monomer. The cofactor is Mg(2+).

The protein localises to the cytoplasm. The enzyme catalyses Endonucleolytic cleavage to 5'-phosphomonoester.. Its function is as follows. Endonuclease that specifically degrades the RNA of RNA-DNA hybrids. This Cupriavidus pinatubonensis (strain JMP 134 / LMG 1197) (Cupriavidus necator (strain JMP 134)) protein is Ribonuclease H.